Consider the following 462-residue polypeptide: Probable peptidoglycan glycosyltransferase FtsW (462 aa).

The Cytoplasmic segment spans residues 1 to 63 (MGCIVCSDGI…VRDGRKFDAP (63 aa)). The chain crosses the membrane as a helical span at residues 64 to 84 (LLWMVVLMTAFGLLMIYSASV). The Periplasmic portion of the chain corresponds to 85–97 (YLASKEGGDQFFY). A helical membrane pass occupies residues 98 to 118 (LTRQAGFVVAGLIASGFLWFL). Topologically, residues 119–125 (CRMRTWR) are cytoplasmic. Residues 126 to 146 (RLVPWIFALSGLLLVAVLIAG) form a helical membrane-spanning segment. Over 147–160 (REINGATRWIPLGP) the chain is Periplasmic. Residues 161–181 (LNFQPTELFKLAVILYLASLF) traverse the membrane as a helical segment. Residues 182-227 (TRREEVLRSMESLGWQSIWRGTANLIMSATNPQARRETLEMYGRFR) lie on the Cytoplasmic side of the membrane. Helical transmembrane passes span 228–248 (AIILPIMLVAFGLVLIMVQPD) and 249–269 (FGSFVVITVITVGMLFLAGLP). Over 270-271 (WK) the chain is Cytoplasmic. Residues 272 to 292 (YFFVLVGSVLGGMVLMITAAP) traverse the membrane as a helical segment. At 293–348 (YRVQRVVAFLDPWKDPQGAGYQLTHSLMAIGRGEWFGMGLGASLSKRGFLPEAHTD) the chain is on the periplasmic side. A helical membrane pass occupies residues 349–369 (FIFAIIAEEFGFFGMCVLIFC). At 370 to 386 (YGWLVVRAFSIGKQSRD) the chain is on the cytoplasmic side. A helical membrane pass occupies residues 387-409 (LGLTFNAYIASGIGIWIGIQSFF). Residues 410–424 (NIGVNIGALPTKGLT) are Periplasmic-facing. Residues 425 to 445 (LPLMSYGGSSVFFMLISMMLL) form a helical membrane-spanning segment. Over 446-462 (LRIDYENRRKMRGYRVE) the chain is Cytoplasmic.

This sequence belongs to the SEDS family. FtsW subfamily.

It localises to the cell inner membrane. It catalyses the reaction [GlcNAc-(1-&gt;4)-Mur2Ac(oyl-L-Ala-gamma-D-Glu-L-Lys-D-Ala-D-Ala)](n)-di-trans,octa-cis-undecaprenyl diphosphate + beta-D-GlcNAc-(1-&gt;4)-Mur2Ac(oyl-L-Ala-gamma-D-Glu-L-Lys-D-Ala-D-Ala)-di-trans,octa-cis-undecaprenyl diphosphate = [GlcNAc-(1-&gt;4)-Mur2Ac(oyl-L-Ala-gamma-D-Glu-L-Lys-D-Ala-D-Ala)](n+1)-di-trans,octa-cis-undecaprenyl diphosphate + di-trans,octa-cis-undecaprenyl diphosphate + H(+). It participates in cell wall biogenesis; peptidoglycan biosynthesis. Functionally, peptidoglycan polymerase that is essential for cell division. In Neisseria gonorrhoeae (strain NCCP11945), this protein is Probable peptidoglycan glycosyltransferase FtsW.